Consider the following 372-residue polypeptide: Ciliary neurotrophic factor receptor subunit alpha (372 aa).

A signal peptide spans 1 to 22 (MAAPVPWACCAVLAAAAAVVYA). One can recognise an Ig-like C2-type domain in the interval 27–104 (PQEAPHVQYE…WHLRHQVLLH (78 aa)). Cysteines 46 and 89 form a disulfide. N-linked (GlcNAc...) asparagine glycans are attached at residues asparagine 60, asparagine 70, asparagine 142, and asparagine 190. 2 consecutive Fibronectin type-III domains span residues 108-205 (PPRE…VKPD) and 206-306 (PPEN…TEEP). The WSXWS motif signature appears at 290–294 (WSDWS). Residues 301–340 (PWTEEPRHLTTEAQAAETTTSTTSSLAPPPTTKICDPGEL) form a disordered region. Positions 311-326 (TEAQAAETTTSTTSSL) are enriched in low complexity. Serine 342 is lipidated: GPI-anchor amidated serine. Positions 343-372 (GGGPSAPFLVSVPITLALAAAAATASSLLI) are cleaved as a propeptide — removed in mature form.

The protein belongs to the type I cytokine receptor family. Type 3 subfamily. Forms a heterotrimer with LIFR and IL6ST. Interacts with heterodimeric neurotropic cytokine composed of CLCF1/CLC and CRLF1/CLF-1. Either alone or in complex with the heterodimer CLCF1-CRLF1 interacts with SORL1; this interaction may promote internalization and lysosomal degradation. Component of a receptor complex composed of IL6ST/GP130, IL27RA/WSX1 and CNTFR which interacts with the neuroprotective peptide humanin. In terms of tissue distribution, nervous system and skeletal muscle.

The protein resides in the cell membrane. In terms of biological role, binds to CNTF. The alpha subunit provides the receptor specificity. Receptor for heterodimeric neurotropic cytokine composed of CLCF1/CLC and CRLF1/CLF-1. Acts as a receptor for the neuroprotective peptide humanin as part of a complex with IL6ST/GP130 and IL27RA/WSX1. This is Ciliary neurotrophic factor receptor subunit alpha (CNTFR) from Homo sapiens (Human).